We begin with the raw amino-acid sequence, 45 residues long: uncharacterized protein (45 aa).

This is an uncharacterized protein from Acidianus two-tailed virus (ATV).